The following is a 290-amino-acid chain: Ribosomal RNA small subunit methyltransferase A (290 aa).

S-adenosyl-L-methionine is bound by residues Asn27, Leu29, Gly54, Glu75, Asp100, and Asn125.

This sequence belongs to the class I-like SAM-binding methyltransferase superfamily. rRNA adenine N(6)-methyltransferase family. RsmA subfamily.

The protein resides in the cytoplasm. It carries out the reaction adenosine(1518)/adenosine(1519) in 16S rRNA + 4 S-adenosyl-L-methionine = N(6)-dimethyladenosine(1518)/N(6)-dimethyladenosine(1519) in 16S rRNA + 4 S-adenosyl-L-homocysteine + 4 H(+). Functionally, specifically dimethylates two adjacent adenosines (A1518 and A1519) in the loop of a conserved hairpin near the 3'-end of 16S rRNA in the 30S particle. May play a critical role in biogenesis of 30S subunits. The protein is Ribosomal RNA small subunit methyltransferase A of Streptococcus pyogenes serotype M3 (strain ATCC BAA-595 / MGAS315).